The sequence spans 397 residues: RNA pseudouridine synthase 5 (397 aa).

The region spanning 64–114 is the S4 RNA-binding domain; that stretch reads APLPGWIKRIRDGQITVDGEVATDPDMILREGSKLVYHRLPWQEPFAPHLL.

It belongs to the pseudouridine synthase RluA family.

The enzyme catalyses a uridine in RNA = a pseudouridine in RNA. This is RNA pseudouridine synthase 5 from Oryza sativa subsp. japonica (Rice).